The primary structure comprises 1261 residues: Structural maintenance of chromosomes protein 3 (1261 aa).

2 coiled-coil regions span residues glutamate 188–glutamine 332 and leucine 406–aspartate 450. Residues asparagine 534–alanine 645 form the SMC hinge domain. Coiled coils occupy residues lysine 677–methionine 826, asparagine 857–threonine 930, and arginine 1023–lysine 1085. The DA-box motif lies at leucine 1159–leucine 1193.

It belongs to the SMC family. SMC3 subfamily. Component of the cohesin complex, composed of the smc-1 and smc-3 heterodimer attached via their SMC hinge domain, scc-1 which links them, and scc-3. Interacts with scc-1, smc-1 and tim-1.

It is found in the nucleus. The protein localises to the chromosome. Its function is as follows. Involved in chromosome cohesion during cell cycle and in DNA repair. Involved in the repair of double strand breaks during mitosis and meiosis. Required for chromosome segregation during mitosis. Central component of cohesin complex. The cohesin complex is required for the cohesion of sister chromatids after DNA replication. The cohesin complex apparently forms a large proteinaceous ring within which sister chromatids can be trapped. At anaphase, the complex is cleaved and dissociates from chromatin, allowing sister chromatids to segregate. Required for the localization of lab-1 to meiotic and mitotic chromosomes. In Caenorhabditis elegans, this protein is Structural maintenance of chromosomes protein 3.